A 127-amino-acid chain; its full sequence is Large ribosomal subunit protein bL12 (127 aa).

It belongs to the bacterial ribosomal protein bL12 family. In terms of assembly, homodimer. Part of the ribosomal stalk of the 50S ribosomal subunit. Forms a multimeric L10(L12)X complex, where L10 forms an elongated spine to which 2 to 4 L12 dimers bind in a sequential fashion. Binds GTP-bound translation factors.

Functionally, forms part of the ribosomal stalk which helps the ribosome interact with GTP-bound translation factors. Is thus essential for accurate translation. The protein is Large ribosomal subunit protein bL12 of Carboxydothermus hydrogenoformans (strain ATCC BAA-161 / DSM 6008 / Z-2901).